The sequence spans 245 residues: Transmembrane protein 116 (245 aa).

Transmembrane regions (helical) follow at residues 24-44 (MAFV…FCLG), 88-108 (GIAI…VLLI), 141-161 (FYPV…IIKL), and 173-195 (LYVL…YGWT).

Its subcellular location is the membrane. This is Transmembrane protein 116 (TMEM116) from Homo sapiens (Human).